The following is a 247-amino-acid chain: EGF-like domain-containing protein C02B10.3 (247 aa).

The first 17 residues, 1-17, serve as a signal peptide directing secretion; sequence MTGALCIVLFGVTMVTA. Residues 18 to 220 are Extracellular-facing; it reads ERPKIKDTHG…LCDKRCQKGH (203 aa). EGF-like domains lie at 114 to 150 and 180 to 213; these read FGTS…RFCE and SGAS…DLCD. Disulfide bonds link cysteine 123-cysteine 138, cysteine 140-cysteine 149, cysteine 190-cysteine 201, and cysteine 203-cysteine 212. A glycan (N-linked (GlcNAc...) asparagine) is linked at asparagine 126. The helical transmembrane segment at 221 to 240 threads the bilayer; it reads VTCSTCSSFIPAALFAIILL. Residues 241–247 lie on the Cytoplasmic side of the membrane; sequence CVNKFNY.

The protein localises to the membrane. The polypeptide is EGF-like domain-containing protein C02B10.3 (Caenorhabditis elegans).